The chain runs to 164 residues: S-ribosylhomocysteine lyase (164 aa).

Fe cation-binding residues include His54, His58, and Cys128.

Belongs to the LuxS family. As to quaternary structure, homodimer. The cofactor is Fe cation.

The enzyme catalyses S-(5-deoxy-D-ribos-5-yl)-L-homocysteine = (S)-4,5-dihydroxypentane-2,3-dione + L-homocysteine. Functionally, involved in the synthesis of autoinducer 2 (AI-2) which is secreted by bacteria and is used to communicate both the cell density and the metabolic potential of the environment. The regulation of gene expression in response to changes in cell density is called quorum sensing. Catalyzes the transformation of S-ribosylhomocysteine (RHC) to homocysteine (HC) and 4,5-dihydroxy-2,3-pentadione (DPD). In Campylobacter hominis (strain ATCC BAA-381 / DSM 21671 / CCUG 45161 / LMG 19568 / NCTC 13146 / CH001A), this protein is S-ribosylhomocysteine lyase.